A 468-amino-acid polypeptide reads, in one-letter code: 3-isopropylmalate dehydratase large subunit (468 aa).

Residues C347, C407, and C410 each contribute to the [4Fe-4S] cluster site.

Belongs to the aconitase/IPM isomerase family. LeuC type 1 subfamily. Heterodimer of LeuC and LeuD. [4Fe-4S] cluster serves as cofactor.

It catalyses the reaction (2R,3S)-3-isopropylmalate = (2S)-2-isopropylmalate. Its pathway is amino-acid biosynthesis; L-leucine biosynthesis; L-leucine from 3-methyl-2-oxobutanoate: step 2/4. Its function is as follows. Catalyzes the isomerization between 2-isopropylmalate and 3-isopropylmalate, via the formation of 2-isopropylmaleate. The chain is 3-isopropylmalate dehydratase large subunit from Campylobacter jejuni (strain RM1221).